The following is a 152-amino-acid chain: SKP1-like protein 10 (152 aa).

The segment at 94-152 (IMAANYLNIKSLLDLACQTVADMIKDNTVEHTRKFFNIENDYTHEEEEAVRRENQWGFE) is interaction with the F-box domain of F-box proteins.

Belongs to the SKP1 family. Part of a SCF (SKP1-cullin-F-box) protein ligase complex. Interacts with CPR1/CPR30. As to expression, expressed in young seedlings, roots, leaves, floral stems, inflorescences, and siliques.

It is found in the nucleus. Its pathway is protein modification; protein ubiquitination. Its function is as follows. Involved in ubiquitination and subsequent proteasomal degradation of target proteins. Together with CUL1, RBX1 and a F-box protein, it forms a SCF E3 ubiquitin ligase complex. The functional specificity of this complex depends on the type of F-box protein. In the SCF complex, it serves as an adapter that links the F-box protein to CUL1. This chain is SKP1-like protein 10 (ASK10), found in Arabidopsis thaliana (Mouse-ear cress).